Consider the following 108-residue polypeptide: Iron-sulfur cluster assembly protein CyaY (108 aa).

This sequence belongs to the frataxin family.

Functionally, involved in iron-sulfur (Fe-S) cluster assembly. May act as a regulator of Fe-S biogenesis. This Burkholderia cenocepacia (strain ATCC BAA-245 / DSM 16553 / LMG 16656 / NCTC 13227 / J2315 / CF5610) (Burkholderia cepacia (strain J2315)) protein is Iron-sulfur cluster assembly protein CyaY.